The sequence spans 638 residues: 1-deoxy-D-xylulose-5-phosphate synthase (638 aa).

Thiamine diphosphate contacts are provided by residues His-74 and 115–117 (GHS). Asp-146 lines the Mg(2+) pocket. Thiamine diphosphate is bound by residues 147-148 (GA), Asn-175, Tyr-286, and Glu-366. Mg(2+) is bound at residue Asn-175.

Belongs to the transketolase family. DXPS subfamily. As to quaternary structure, homodimer. Mg(2+) is required as a cofactor. It depends on thiamine diphosphate as a cofactor.

It carries out the reaction D-glyceraldehyde 3-phosphate + pyruvate + H(+) = 1-deoxy-D-xylulose 5-phosphate + CO2. It functions in the pathway metabolic intermediate biosynthesis; 1-deoxy-D-xylulose 5-phosphate biosynthesis; 1-deoxy-D-xylulose 5-phosphate from D-glyceraldehyde 3-phosphate and pyruvate: step 1/1. In terms of biological role, catalyzes the acyloin condensation reaction between C atoms 2 and 3 of pyruvate and glyceraldehyde 3-phosphate to yield 1-deoxy-D-xylulose-5-phosphate (DXP). This Syntrophomonas wolfei subsp. wolfei (strain DSM 2245B / Goettingen) protein is 1-deoxy-D-xylulose-5-phosphate synthase.